A 102-amino-acid chain; its full sequence is Secretoglobin family 1D member (102 aa).

The N-terminal stretch at 1–21 (MRLSVTALLVTLALCYYEANA) is a signal peptide. The N-linked (GlcNAc...) asparagine glycan is linked to Asn-87.

The protein belongs to the secretoglobin family. Lipophilin subfamily.

It localises to the secreted. In terms of biological role, may bind androgens and other steroids. May be under transcriptional regulation of steroid hormones. The sequence is that of Secretoglobin family 1D member (SCGB1D) from Bos taurus (Bovine).